The primary structure comprises 393 residues: tRNA-specific 2-thiouridylase MnmA (393 aa).

ATP-binding positions include 19–26 and leucine 45; that span reads AMSGGVDS. Cysteine 113 (nucleophile) is an active-site residue. Residues cysteine 113 and cysteine 210 are joined by a disulfide bond. Residue glycine 137 coordinates ATP. The interval 160–162 is interaction with tRNA; the sequence is RDQ. Residue cysteine 210 is the Cysteine persulfide intermediate of the active site.

The protein belongs to the MnmA/TRMU family.

Its subcellular location is the cytoplasm. It carries out the reaction S-sulfanyl-L-cysteinyl-[protein] + uridine(34) in tRNA + AH2 + ATP = 2-thiouridine(34) in tRNA + L-cysteinyl-[protein] + A + AMP + diphosphate + H(+). Its function is as follows. Catalyzes the 2-thiolation of uridine at the wobble position (U34) of tRNA, leading to the formation of s(2)U34. This is tRNA-specific 2-thiouridylase MnmA from Bradyrhizobium diazoefficiens (strain JCM 10833 / BCRC 13528 / IAM 13628 / NBRC 14792 / USDA 110).